Consider the following 376-residue polypeptide: DNA repair protein RAD51 homolog 3 (376 aa).

The interval 1–126 (MRGKTFRFEM…LMKTTEICGA (126 aa)) is required for Holliday junction resolution activity. Ser-20 bears the Phosphoserine mark. Residues 79-136 (SESHKKCTALELLEQEHTQGFIITFCSALDDILGGGVPLMKTTEICGAPGVGKTQLCM) are interaction with RAD51B, RAD51D and XRCC3. Residue 125 to 132 (GAPGVGKT) participates in ATP binding. The Nuclear localization signal motif lies at 366-370 (RKRSR).

It belongs to the RecA family. RAD51 subfamily. As to quaternary structure, part of the RAD51 paralog protein complexes BCDX2 and CX3; the complexes have a ring-like structure arranged into a flat disc around a central channel. The BCDX2 complex consits of RAD51B, RAD51C, RAD51D and XRCC2; the CX3 complex consists of RAD51C and XRCC3. The BCDX2 subcomplex RAD51B:RAD51C interacts with RAD51. Interacts with SWSAP1; involved in homologous recombination repair. Interacts directly with PALB2 which may serve as a scaffold for a HR complex containing PALB2, BRCA2, RAD51C, RAD51 and XRCC3. Interacts with HELQ. Interacts with DNA damage up-regulated protein DDUP. Expressed in a variety of tissues, with highest expression in testis, heart muscle, spleen and prostate.

The protein localises to the nucleus. It is found in the cytoplasm. It localises to the perinuclear region. Its subcellular location is the mitochondrion. Essential for the homologous recombination (HR) pathway of DNA repair. Involved in the homologous recombination repair (HRR) pathway of double-stranded DNA breaks arising during DNA replication or induced by DNA-damaging agents. Part of the RAD51 paralog protein complexes BCDX2 and CX3 which act at different stages of the BRCA1-BRCA2-dependent HR pathway. Upon DNA damage, BCDX2 seems to act downstream of BRCA2 recruitment and upstream of RAD51 recruitment; CX3 seems to act downstream of RAD51 recruitment; both complexes bind predominantly to the intersection of the four duplex arms of the Holliday junction (HJ) and to junction of replication forks. The BCDX2 complex was originally reported to bind single-stranded DNA, single-stranded gaps in duplex DNA and specifically to nicks in duplex DNA. The BCDX2 subcomplex RAD51B:RAD51C exhibits single-stranded DNA-dependent ATPase activity suggesting an involvement in early stages of the HR pathway. Involved in RAD51 foci formation in response to DNA damage suggesting an involvement in early stages of HR probably in the invasion step. Has an early function in DNA repair in facilitating phosphorylation of the checkpoint kinase CHEK2 and thereby transduction of the damage signal, leading to cell cycle arrest and HR activation. Participates in branch migration and HJ resolution and thus is important for processing HR intermediates late in the DNA repair process; the function may be linked to the CX3 complex. Part of a PALB2-scaffolded HR complex containing BRCA2 and which is thought to play a role in DNA repair by HR. Protects RAD51 from ubiquitin-mediated degradation that is enhanced following DNA damage. Plays a role in regulating mitochondrial DNA copy number under conditions of oxidative stress in the presence of RAD51 and XRCC3. Contributes to DNA cross-link resistance, sister chromatid cohesion and genomic stability. Involved in maintaining centrosome number in mitosis. In Homo sapiens (Human), this protein is DNA repair protein RAD51 homolog 3 (RAD51C).